The primary structure comprises 152 residues: MKVIFLQDVKGKGKKGEIKEVPLGYAQNFLIKKNLAKEATKQAIGELKGKQKSEEKHAAELLAEAKRVKEQLEKEENRLQFTEKVGPDGRTFGSITAKKIAEELQKQFGIKIDKRHIELEHPIRAIGLIEVPVKLHKEVNAQIKLNIKNSAE.

Belongs to the bacterial ribosomal protein bL9 family.

Its function is as follows. Binds to the 23S rRNA. The chain is Large ribosomal subunit protein bL9 from Streptococcus thermophilus (strain CNRZ 1066).